Consider the following 325-residue polypeptide: MIIVTGGAGFIGSNIVQGLNDRGITDILVVDDLRDGRKCLNLADADIRDYMDMDDFLARIQTGEDLGRVEAVFHEGACSSTTEWDGRFVMRVNYEYTKALLAWCTQRKIPLIYASSASVYGMGPTFREAREFEQPLNMYAYSKFLFDCHLRAQQGIESQVVGLRYFNVYGPREQHKGSMASVAYHFNNQLNESGRVRLFEGSDGYGPGEQRRDFIHVDDVVAVNLWLFDNPQVSGIYNLGTGRAQSFNDVARAAIKWFRAQGEDGGRERGGIDYIPFPDHLKGRYQSFTEADMGALRAAGYDRPFMDVETGVPAYLSWLASQDKR.

Residues 10 to 11, 31 to 32, Lys38, and 75 to 79 each bind NADP(+); these read FI, DD, and EGACS. Tyr139 functions as the Proton acceptor in the catalytic mechanism. Lys143 serves as a coordination point for NADP(+). A substrate-binding site is contributed by Asn167. 2 residues coordinate NADP(+): Val168 and Lys176. The active-site Proton acceptor is the Lys176. Residues Ser178, His185, 199–202, Arg212, and Tyr285 each bind substrate; that span reads FEGS.

Belongs to the NAD(P)-dependent epimerase/dehydratase family. HldD subfamily. As to quaternary structure, homopentamer. NADP(+) is required as a cofactor.

It carries out the reaction ADP-D-glycero-beta-D-manno-heptose = ADP-L-glycero-beta-D-manno-heptose. It participates in nucleotide-sugar biosynthesis; ADP-L-glycero-beta-D-manno-heptose biosynthesis; ADP-L-glycero-beta-D-manno-heptose from D-glycero-beta-D-manno-heptose 7-phosphate: step 4/4. In terms of biological role, catalyzes the interconversion between ADP-D-glycero-beta-D-manno-heptose and ADP-L-glycero-beta-D-manno-heptose via an epimerization at carbon 6 of the heptose. The polypeptide is ADP-L-glycero-D-manno-heptose-6-epimerase (Azoarcus sp. (strain BH72)).